A 130-amino-acid chain; its full sequence is Ribosome-binding factor A (130 aa).

The disordered stretch occupies residues 111-130 (RDLDDVGPEATSSDEDAEQR).

The protein belongs to the RbfA family. As to quaternary structure, monomer. Binds 30S ribosomal subunits, but not 50S ribosomal subunits or 70S ribosomes.

It is found in the cytoplasm. Its function is as follows. One of several proteins that assist in the late maturation steps of the functional core of the 30S ribosomal subunit. Associates with free 30S ribosomal subunits (but not with 30S subunits that are part of 70S ribosomes or polysomes). Required for efficient processing of 16S rRNA. May interact with the 5'-terminal helix region of 16S rRNA. The sequence is that of Ribosome-binding factor A from Xanthomonas axonopodis pv. citri (strain 306).